Here is an 84-residue protein sequence, read N- to C-terminus: Beta/gamma-crystallin (84 aa).

2 consecutive Beta/gamma crystallin 'Greek key' domains span residues 2-42 and 43-84; these read GKII…IVES and GTWF…VKQQ. Positions 64-84 are disordered; the sequence is KYPNPGSWGGNDDELSSVKQQ.

It belongs to the beta/gamma-crystallin family. As to quaternary structure, monomer. In terms of tissue distribution, palps of larvae and otolith of the light-sensing ocellus.

Structural component of the neuroectodermal visual system. The sequence is that of Beta/gamma-crystallin from Ciona intestinalis (Transparent sea squirt).